Here is a 2542-residue protein sequence, read N- to C-terminus: Probable polyketide synthase 41 (2542 aa).

The region spanning 11–441 (CNKVAIIGIG…GSNCCLIVSS (431 aa)) is the Ketosynthase family 3 (KS3) domain. Residues cysteine 177, histidine 318, and histidine 360 each act as for beta-ketoacyl synthase activity in the active site. Residues 628-661 (GIKPSIIVGHSLGEISSSYCSGMIDLDTFCYLIY) are acyl/malonyl transferase. Residue serine 638 is the For acyl/malonyl transferase activity of the active site. An N-terminal hotdog fold region spans residues 926–1059 (INHLGISNSN…ANFQLFSRGP (134 aa)). Residues 926–1231 (INHLGISNSN…FKSTTKIKDP (306 aa)) enclose the PKS/mFAS DH domain. The active-site Proton acceptor; for dehydratase activity is histidine 959. Residues 1083 to 1231 (NLTKLSKQEL…FKSTTKIKDP (149 aa)) are C-terminal hotdog fold. The Proton donor; for dehydratase activity role is filled by aspartate 1145. Positions 2459–2537 (NVELTVDQLI…SFIQLVKNSM (79 aa)) constitute a Carrier domain. Serine 2496 is subject to O-(pantetheine 4'-phosphoryl)serine.

Pantetheine 4'-phosphate is required as a cofactor.

Probable polyketide synthase. This is Probable polyketide synthase 41 (pks41) from Dictyostelium discoideum (Social amoeba).